The chain runs to 418 residues: Glutamyl-tRNA reductase (418 aa).

Substrate is bound by residues 49-52, serine 109, 114-116, and glutamine 120; these read TCNR and EPQ. The active-site Nucleophile is cysteine 50. 189-194 contributes to the NADP(+) binding site; it reads GAGETI.

Belongs to the glutamyl-tRNA reductase family. In terms of assembly, homodimer.

The catalysed reaction is (S)-4-amino-5-oxopentanoate + tRNA(Glu) + NADP(+) = L-glutamyl-tRNA(Glu) + NADPH + H(+). Its pathway is porphyrin-containing compound metabolism; protoporphyrin-IX biosynthesis; 5-aminolevulinate from L-glutamyl-tRNA(Glu): step 1/2. Functionally, catalyzes the NADPH-dependent reduction of glutamyl-tRNA(Glu) to glutamate 1-semialdehyde (GSA). This Cronobacter sakazakii (strain ATCC BAA-894) (Enterobacter sakazakii) protein is Glutamyl-tRNA reductase.